Here is an 868-residue protein sequence, read N- to C-terminus: Leucine--tRNA ligase (868 aa).

A 'HIGH' region motif is present at residues 42–52; it reads PYPSGKLHMGH. A 'KMSKS' region motif is present at residues 627–631; that stretch reads KMSKS. Lys-630 is an ATP binding site.

Belongs to the class-I aminoacyl-tRNA synthetase family.

It localises to the cytoplasm. The catalysed reaction is tRNA(Leu) + L-leucine + ATP = L-leucyl-tRNA(Leu) + AMP + diphosphate. The polypeptide is Leucine--tRNA ligase (Pseudomonas putida (strain ATCC 47054 / DSM 6125 / CFBP 8728 / NCIMB 11950 / KT2440)).